The sequence spans 340 residues: MNVFEPRLSSWLENAGDDDDVVLSSRIRLARNLKDEQFPIYDQKEEVVDNIAEVFDDNFTLIKMNQISKLQKALLVEKHLISPYMMNKSEYGAVLLNEEENVSIMLNEEDHLRIQCMTPGLRLFDALEAALQIDGYVEEKLTYAFDKQFGYLTSCVTNIGTGMRASVMVHLPGLVTTKRIKSVIEAIRSLGFVVRGIYGEGSMPASSIFQVSNQVTLGKTETEIVEDLTQVMEQIIMQERVARTTLKQKFHIALEDRVFRSYGLLMNCRIISMQEASDAISDIRLGVELGFFEHISRQKMNELVLFSQPAFLRKEAGRDMDELEEKVIRAKVIREILGDK.

The Phosphagen kinase C-terminal domain occupies 21-242 (VVLSSRIRLA…EQIIMQERVA (222 aa)). ATP contacts are provided by residues 24-28 (SSRIR), His79, Arg113, 164-168 (RASVM), and 195-200 (RGIYGE).

Belongs to the ATP:guanido phosphotransferase family.

It carries out the reaction L-arginyl-[protein] + ATP = N(omega)-phospho-L-arginyl-[protein] + ADP + H(+). In terms of biological role, catalyzes the specific phosphorylation of arginine residues in proteins. The polypeptide is Protein-arginine kinase (Listeria innocua serovar 6a (strain ATCC BAA-680 / CLIP 11262)).